Reading from the N-terminus, the 111-residue chain is Ig kappa chain V-III region PC 7175 (111 aa).

Positions 1 to 23 (DIVLTQSPASLAVSLGQRATISC) are framework-1. Cysteines 23 and 92 form a disulfide. The segment at 24 to 38 (RASKSVSTSGYSYMH) is complementarity-determining-1. A framework-2 region spans residues 39 to 53 (WYQQKPGQPPKLLIY). A complementarity-determining-2 region spans residues 54–60 (LASNLES). The segment at 61–92 (GVPARFSGSGSGTDFTLNIHPVEEEDAATYYC) is framework-3. A complementarity-determining-3 region spans residues 93 to 101 (QHSRELPLT). Residues 102–111 (FGAGTKLELK) form a framework-4 region.

This Mus musculus (Mouse) protein is Ig kappa chain V-III region PC 7175.